A 282-amino-acid chain; its full sequence is Anamorsin homolog (282 aa).

Positions 1-140 are N-terminal SAM-like domain; sequence MADLQGKAVL…KPVYEVGAAA (140 aa). A linker region spans residues 141–192; that stretch reads PLKLSFAKKKQSGAAAPAAQVAEVWTIATDDFDDDDLLENDGDELLDAEDLA. 4 residues coordinate [2Fe-2S] cluster: Cys-203, Cys-214, Cys-217, and Cys-219. The segment at 203–219 is fe-S binding site A; the sequence is CEVGAGGKRRACKNCTC. Cys-243, Cys-246, Cys-254, and Cys-257 together coordinate [4Fe-4S] cluster. 2 consecutive short sequence motifs (cx2C motif) follow at residues 243–246 and 254–257; these read CGNC and CASC. Positions 243 to 257 are fe-S binding site B; sequence CGNCYLGDAFRCASC.

Belongs to the anamorsin family. As to quaternary structure, monomer. [2Fe-2S] cluster is required as a cofactor. Requires [4Fe-4S] cluster as cofactor.

The protein localises to the cytoplasm. It is found in the mitochondrion intermembrane space. Component of the cytosolic iron-sulfur (Fe-S) protein assembly (CIA) machinery. Required for the maturation of extramitochondrial Fe-S proteins. Part of an electron transfer chain functioning in an early step of cytosolic Fe-S biogenesis, facilitating the de novo assembly of a [4Fe-4S] cluster on the cytosolic Fe-S scaffold complex. Electrons are transferred from NADPH via a FAD- and FMN-containing diflavin oxidoreductase. Together with the diflavin oxidoreductase, also required for the assembly of the diferric tyrosyl radical cofactor of ribonucleotide reductase (RNR), probably by providing electrons for reduction during radical cofactor maturation in the catalytic small subunit. The protein is Anamorsin homolog of Monosiga brevicollis (Choanoflagellate).